Consider the following 344-residue polypeptide: Phenylalanine--tRNA ligase alpha subunit (344 aa).

Glu269 is a binding site for Mg(2+).

It belongs to the class-II aminoacyl-tRNA synthetase family. Phe-tRNA synthetase alpha subunit type 1 subfamily. Tetramer of two alpha and two beta subunits. Requires Mg(2+) as cofactor.

The protein resides in the cytoplasm. The enzyme catalyses tRNA(Phe) + L-phenylalanine + ATP = L-phenylalanyl-tRNA(Phe) + AMP + diphosphate + H(+). The sequence is that of Phenylalanine--tRNA ligase alpha subunit from Ralstonia nicotianae (strain ATCC BAA-1114 / GMI1000) (Ralstonia solanacearum).